Here is a 342-residue protein sequence, read N- to C-terminus: Epoxide hydrolase srdG (342 aa).

The AB hydrolase-1 domain maps to 44–332; the sequence is ATVLLLHGWP…LIHTPEEVNK (289 aa). Catalysis depends on aspartate 122, which acts as the Nucleophile. The Proton acceptor role is filled by histidine 320.

It belongs to the AB hydrolase superfamily. Epoxide hydrolase family.

Highly reducing polyketide synthase; part of the gene cluster that mediates the biosynthesis of sordarial, a salicylic aldehyde structurally related to the phytotoxin pyriculol. The most interesting aspect of this pathway is formation of an aromatic product from the highly reducing polyketide synthase srdA. SrdA synthesizes a reduced polyketide chain from one molecule of acetyl-CoA and five molecules of malonyl-CoA. The polyketide chain is then reductively released as an aldehyde. The oxidoreductases srdC, srdD and srdE then oxidize one of the hydroxy groups to facilitate the intramolecular aldol condensation, followed by dehydration to yield a salicylic aldehyde. This aldehyde can undergo facile reduction by endogenous reductases to yield the alcohol 1-hydroxy-2-hydroxymethyl-3-pent-1,3-dienylbenzene. The flavin-dependent srdI counteract against the propensity of the aldehydes to be reduced under physiological conditions and is responsible for reoxidizing 1-hydroxy-2-hydroxymethyl-3-pent-1,3-dienylbenzene back to the salicylic aldehyde. This salicylic aldehyde is then selectively epoxidized by the cupin-domain-containing oxidoreductase srdB to yield the epoxide, which can be hydrolyzed stereoselectively by the hydrolase srdG to give the final product sordarial. This chain is Epoxide hydrolase srdG, found in Neurospora crassa (strain ATCC 24698 / 74-OR23-1A / CBS 708.71 / DSM 1257 / FGSC 987).